The chain runs to 378 residues: Ribosomal RNA large subunit methyltransferase G (378 aa).

The protein belongs to the methyltransferase superfamily. RlmG family.

It is found in the cytoplasm. It catalyses the reaction guanosine(1835) in 23S rRNA + S-adenosyl-L-methionine = N(2)-methylguanosine(1835) in 23S rRNA + S-adenosyl-L-homocysteine + H(+). Specifically methylates the guanine in position 1835 (m2G1835) of 23S rRNA. This is Ribosomal RNA large subunit methyltransferase G from Escherichia coli O157:H7.